The chain runs to 792 residues: MKFSENWLRSHVPIQATRDELAATLTAIGLEVEEVIPLGESLGQVVVARIVEAMRHPEADRLQVCSVDAGQGELLQIVCGAPNARPGLVAPLALVGAKIGELTITAAKLRGVASNGMLCSAKELGLDSDAAGLFELPDDAPVGQALAEYLGLPDASIEIKLTPNRADCFSVRGIAFDVAAACASEVVAFDAGAVAPVSTRTLAVELDAGKDAPRYCGRVIEGIDPAAKTPVWLAERLRRSGVRPVSLLVDITQYVMLELGQPMHAFDLDTLHGPIGVRRSCAGEQLALLDGRQVTLDDSFLTIADAGRPVALAGLMGGLDTRVTETTRNVFLESAYFDPAAIMGRGRKLGLHTDAGHRFERGVDPALPPQAIEVATRLVLELAGGTPGPVVHAQLPQHLPQPARILLRRARIARVLGIQIDDVDVVRMLRALGMQLDAVAEGWEVMAPSRRFDIAIEEDLIEDLARIHGYDRVPTTLPGGASRIAMPSETQLDELSVRRQLVARELQETINYAFVDAALLERWQLTNGLVPLANPLSAELAIMRPCLLPGLVATLGRNAARQAGRVRLFELGKVFAAAADAGAAPQESQHVAAAVCGDALALQWGEAARKVDFHDVKGDLMALAAASGAQLEFQPSTQPFGHPGRSADIYRDGVCIGWIGQVHPRLAKALDIDVDVIAFELQLGPLVQRTLPCAGELSRFPSVRRDLAFLVPDEVSWAAVSASVRTTVGPLLREVQLFDRYVGQGVAPGFKSLAMGLILQDNSRTLTDRDVDAVVTDVVAVIEREHRARIRS.

Residues 39–147 (GESLGQVVVA…DDAPVGQALA (109 aa)) form the tRNA-binding domain. In terms of domain architecture, B5 spans 400–475 (PQPARILLRR…RIHGYDRVPT (76 aa)). 4 residues coordinate Mg(2+): aspartate 453, aspartate 459, glutamate 462, and aspartate 463. An FDX-ACB domain is found at 698 to 791 (SRFPSVRRDL…IEREHRARIR (94 aa)).

It belongs to the phenylalanyl-tRNA synthetase beta subunit family. Type 1 subfamily. Tetramer of two alpha and two beta subunits. Mg(2+) is required as a cofactor.

It localises to the cytoplasm. The catalysed reaction is tRNA(Phe) + L-phenylalanine + ATP = L-phenylalanyl-tRNA(Phe) + AMP + diphosphate + H(+). The chain is Phenylalanine--tRNA ligase beta subunit from Xanthomonas oryzae pv. oryzae (strain KACC10331 / KXO85).